A 176-amino-acid chain; its full sequence is Protein tyrosine phosphatase PRL-1 (176 aa).

The 153-residue stretch at 13 to 165 (GESDAVVFRF…YKPRHQEGNE (153 aa)) folds into the Tyrosine-protein phosphatase domain. An intrachain disulfide couples cysteine 52 to cysteine 107. Aspartate 75 (proton donor) is an active-site residue. The Phosphocysteine intermediate role is filled by cysteine 107. Position 109–113 (109–113 (AGLGR)) interacts with substrate. Cysteine 173 is modified (cysteine methyl ester). Cysteine 173 carries the S-farnesyl cysteine lipid modification. Positions 174-176 (AVM) are cleaved as a propeptide — removed in mature form.

This sequence belongs to the protein-tyrosine phosphatase family.

Its subcellular location is the flagellar pocket. The catalysed reaction is O-phospho-L-tyrosyl-[protein] + H2O = L-tyrosyl-[protein] + phosphate. Activated in a reduced environment which promotes the reduction of the disulfide bond between the regulatory Cys-52 and the catalytic Cys-107 residues. Inhibited by sodium orthovanadate. Its function is as follows. Has protein tyrosine phosphatase activity. The protein is Protein tyrosine phosphatase PRL-1 of Trypanosoma cruzi (strain CL Brener).